A 227-amino-acid chain; its full sequence is Prolactin (227 aa).

Residues 1–28 (MNIKGSPWKGSLLLLLVSNLLLCQSVAP) form the signal peptide. A disulfide bridge connects residues C32 and C39. S54 carries the post-translational modification Phosphoserine. N59 is a glycosylation site (N-linked (GlcNAc...) asparagine; partial). A phosphoserine mark is found at S62, S118, S163, and S194. 2 cysteine pairs are disulfide-bonded: C86–C202 and C219–C227.

The protein belongs to the somatotropin/prolactin family. In terms of assembly, interacts with PRLR.

Its subcellular location is the secreted. Prolactin acts primarily on the mammary gland by promoting lactation. The polypeptide is Prolactin (PRL) (Homo sapiens (Human)).